The following is a 311-amino-acid chain: GTP cyclohydrolase MptA (311 aa).

The protein belongs to the GTP cyclohydrolase IV family. In terms of assembly, homodimer. The cofactor is Fe(2+).

It catalyses the reaction GTP + H2O = 7,8-dihydroneopterin 2',3'-cyclic phosphate + formate + diphosphate + H(+). The protein operates within cofactor biosynthesis; 5,6,7,8-tetrahydromethanopterin biosynthesis. Functionally, converts GTP to 7,8-dihydro-D-neopterin 2',3'-cyclic phosphate, the first intermediate in the biosynthesis of coenzyme methanopterin. The chain is GTP cyclohydrolase MptA from Methanocorpusculum labreanum (strain ATCC 43576 / DSM 4855 / Z).